The sequence spans 416 residues: Gamma-glutamyl phosphate reductase (416 aa).

The protein belongs to the gamma-glutamyl phosphate reductase family.

It is found in the cytoplasm. The catalysed reaction is L-glutamate 5-semialdehyde + phosphate + NADP(+) = L-glutamyl 5-phosphate + NADPH + H(+). Its pathway is amino-acid biosynthesis; L-proline biosynthesis; L-glutamate 5-semialdehyde from L-glutamate: step 2/2. Its function is as follows. Catalyzes the NADPH-dependent reduction of L-glutamate 5-phosphate into L-glutamate 5-semialdehyde and phosphate. The product spontaneously undergoes cyclization to form 1-pyrroline-5-carboxylate. The sequence is that of Gamma-glutamyl phosphate reductase from Vibrio atlanticus (strain LGP32) (Vibrio splendidus (strain Mel32)).